Reading from the N-terminus, the 477-residue chain is Bifunctional protein HldE (477 aa).

The segment at 1 to 319 is ribokinase; sequence MTVIFPNFSK…NIMNSHICTT (319 aa). 195–198 provides a ligand contact to ATP; it reads NISE. The active site involves D264. The interval 346–477 is cytidylyltransferase; sequence MTNGVFDILH…NIINAIKRKN (132 aa).

The protein in the N-terminal section; belongs to the carbohydrate kinase PfkB family. This sequence in the C-terminal section; belongs to the cytidylyltransferase family. In terms of assembly, homodimer.

The catalysed reaction is D-glycero-beta-D-manno-heptose 7-phosphate + ATP = D-glycero-beta-D-manno-heptose 1,7-bisphosphate + ADP + H(+). It carries out the reaction D-glycero-beta-D-manno-heptose 1-phosphate + ATP + H(+) = ADP-D-glycero-beta-D-manno-heptose + diphosphate. It participates in nucleotide-sugar biosynthesis; ADP-L-glycero-beta-D-manno-heptose biosynthesis; ADP-L-glycero-beta-D-manno-heptose from D-glycero-beta-D-manno-heptose 7-phosphate: step 1/4. It functions in the pathway nucleotide-sugar biosynthesis; ADP-L-glycero-beta-D-manno-heptose biosynthesis; ADP-L-glycero-beta-D-manno-heptose from D-glycero-beta-D-manno-heptose 7-phosphate: step 3/4. Its function is as follows. Catalyzes the phosphorylation of D-glycero-D-manno-heptose 7-phosphate at the C-1 position to selectively form D-glycero-beta-D-manno-heptose-1,7-bisphosphate. In terms of biological role, catalyzes the ADP transfer from ATP to D-glycero-beta-D-manno-heptose 1-phosphate, yielding ADP-D-glycero-beta-D-manno-heptose. This chain is Bifunctional protein HldE, found in Blochmanniella pennsylvanica (strain BPEN).